A 231-amino-acid polypeptide reads, in one-letter code: S-norcoclaurine synthase 2 (231 aa).

107-109 (YKE) is a binding site for dopamine. The active-site Proton donor is the lysine 121. Aspartate 140 lines the (4-hydroxyphenyl)acetaldehyde pocket. Residues 210–230 (LLLCLIICLVIAGGMFVAGVP) form a helical membrane-spanning segment.

The protein belongs to the BetVI family. In terms of tissue distribution, expressed in roots, stems and leaves. Detected in flower buds and germinating seeds. Low expression in carpels. Restricted to sieve elements of the phloem adjacent or proximal to laticifers.

The protein resides in the endoplasmic reticulum membrane. It localises to the vacuole membrane. The enzyme catalyses (4-hydroxyphenyl)acetaldehyde + dopamine = (S)-norcoclaurine + H2O. It functions in the pathway alkaloid biosynthesis; (S)-reticuline biosynthesis. With respect to regulation, activity doubles within 5 hours of elicitor treatment and continues to increase for at least 80 hours. In terms of biological role, involved in the biosynthesis of (S)-coclaurine, the common precursor of all benzylisoquinoline alkaloids such as morphine, sanguinarine, codeine or papaverine. Condenses dopamine and 4-hydroxyphenylacetaldehyde. The sequence is that of S-norcoclaurine synthase 2 from Papaver somniferum (Opium poppy).